The following is a 226-amino-acid chain: UPF0758 protein SAK_1186 (226 aa).

In terms of domain architecture, MPN spans 103 to 225; that stretch reads QILSSEQLAR…YYSFREEADI (123 aa). Zn(2+) is bound by residues H174, H176, and D187. A JAMM motif motif is present at residues 174–187; that stretch reads HNHPSGSPKPSESD.

The protein belongs to the UPF0758 family.

The chain is UPF0758 protein SAK_1186 from Streptococcus agalactiae serotype Ia (strain ATCC 27591 / A909 / CDC SS700).